The sequence spans 150 residues: Small ribosomal subunit protein uS13 (150 aa).

This sequence belongs to the universal ribosomal protein uS13 family. As to quaternary structure, part of the 30S ribosomal subunit. Forms a loose heterodimer with protein S19. Forms two bridges to the 50S subunit in the 70S ribosome.

Its function is as follows. Located at the top of the head of the 30S subunit, it contacts several helices of the 16S rRNA. In the 70S ribosome it contacts the 23S rRNA (bridge B1a) and protein L5 of the 50S subunit (bridge B1b), connecting the 2 subunits; these bridges are implicated in subunit movement. This chain is Small ribosomal subunit protein uS13, found in Methanocorpusculum labreanum (strain ATCC 43576 / DSM 4855 / Z).